A 686-amino-acid polypeptide reads, in one-letter code: Catalase-2 (686 aa).

The span at 1-27 shows a compositional bias: basic and acidic residues; sequence MSDDQNKRVNEHSKDEQLEQYRTDNSG. Positions 1-43 are disordered; it reads MSDDQNKRVNEHSKDEQLEQYRTDNSGKKMTTNQGLRVSEDEH. Residues His-78 and Asn-151 contribute to the active site. Residue Tyr-365 coordinates heme.

The protein belongs to the catalase family. HPII subfamily. Heme is required as a cofactor.

The catalysed reaction is 2 H2O2 = O2 + 2 H2O. Decomposes hydrogen peroxide into water and oxygen; serves to protect cells from the toxic effects of hydrogen peroxide. Involved in sporulation. This chain is Catalase-2 (katE), found in Bacillus subtilis (strain 168).